The primary structure comprises 95 residues: Cell division protein FtsB (95 aa).

Residues 1–3 (MRL) are Cytoplasmic-facing. A helical membrane pass occupies residues 4-21 (FILILSAILLLFQYDLWF). The Periplasmic portion of the chain corresponds to 22-95 (GKNGYLDYKE…RIAKENKDNR (74 aa)). The stretch at 28-62 (DYKETAEEIAMHKAENTKLSQRNQVVAAEIRDLKD) forms a coiled coil.

The protein belongs to the FtsB family. Part of a complex composed of FtsB, FtsL and FtsQ.

It localises to the cell inner membrane. Its function is as follows. Essential cell division protein. May link together the upstream cell division proteins, which are predominantly cytoplasmic, with the downstream cell division proteins, which are predominantly periplasmic. This chain is Cell division protein FtsB, found in Mannheimia succiniciproducens (strain KCTC 0769BP / MBEL55E).